A 144-amino-acid polypeptide reads, in one-letter code: Large ribosomal subunit protein uL15 (144 aa).

Residues Gly20–Gly49 form a disordered region. Residues Arg21–Gly31 are compositionally biased toward gly residues.

It belongs to the universal ribosomal protein uL15 family. Part of the 50S ribosomal subunit.

Its function is as follows. Binds to the 23S rRNA. This is Large ribosomal subunit protein uL15 from Neisseria meningitidis serogroup A / serotype 4A (strain DSM 15465 / Z2491).